The chain runs to 131 residues: uncharacterized protein (131 aa).

Transmembrane regions (helical) follow at residues 7–29 (LLKF…SLLY), 49–69 (LVKV…LIAL), 76–98 (LILI…LFTY), and 102–124 (ELSE…FLYL).

The protein localises to the cell membrane. This is an uncharacterized protein from Aquifex aeolicus (strain VF5).